Consider the following 486-residue polypeptide: Arginine/agmatine antiporter (486 aa).

The next 12 membrane-spanning stretches (helical) occupy residues 12 to 32, 41 to 61, 85 to 105, 129 to 149, 161 to 181, 211 to 231, 242 to 262, 296 to 316, 341 to 361, 367 to 387, 418 to 438, and 461 to 481; these read LGAIALAGMVISSMIGGGIFS, AGAGAIILAWILTGIGMFFIA, GFGPYVGFTIGWGYWLCQIFG, NTIPAIIGGSILIWVFNFIVL, IGTICKLIPLLIFIIITAFFF, STMLVTLWAFIGIEGAVVMSA, ATILGFSGCLIVYVLLSLLPF, IGLLIAILSSWLSWTVIVAEI, VSLYITSALMQVAMLLVYFST, MLSITGVMVLPAYLASAAFLV, IWLIYAGGIKYLFMAIVLLAL, and EVTKITIIAFLALLAIFLFST.

The protein belongs to the amino acid-polyamine-organocation (APC) superfamily. Basic amino acid/polyamine antiporter (APA) (TC 2.A.3.2) family.

It is found in the cell inner membrane. Its function is as follows. Catalyzes the exchange of L-arginine for agmatine. The arginine uptake by the bacterium in the macrophage may be a virulence factor against the host innate immune response. This is Arginine/agmatine antiporter (aaxC) from Chlamydia felis (strain Fe/C-56) (Chlamydophila felis).